The chain runs to 521 residues: GSPVFIAFRSSTKKSVQYDDVPEYEDRLSLSENYTLSISNARISDEKRFVCMLVTEDNVFEAPTIVKVFKQPSKPEIVSKAPFLETEQLKKLGDCISKDSYPDGNITWYRNGKVLQPLEGVVVLIFKKQMDPVTQLYTMTSSLEYKATKADIQMQFTCSVTYYGPSGQKTVQSEQAIFDIYYPTEQVTIQVLPSKTAIKEGDIITLKCLGNGNPPPEEFLFYLPGQPEGIRSSNTYTLTDVRRNATGDYKCSLIDKKSMIASTAITVHYLDLSLNPSGEVTKQIGDALPVSCTISASRNATVVWMKDNIRLRSSPSFSSLQYQDAGNYVCETALQEVEGLKKRESLTLIVEGKPQIKMTKKTDPSGLSKTIICHVEGFPKPAIQWTITGSGSVINQTEESPYINGRYYSTIINSPEENVTLTCTAENQLERTVNSLNVSAISIPEHDEADEISDENREQVNHRATLIVGIVLRLLHGALVAGVVYWLYVKKSKTASKHVNKDLGNLEENKKLEQNNHRTEA.

Residues 1 to 465 (GSPVFIAFRS…NREQVNHRAT (465 aa)) lie on the Extracellular side of the membrane. N-linked (GlcNAc...) asparagine glycosylation is found at Asn-33, Asn-105, Asn-244, Asn-299, Asn-395, Asn-418, and Asn-437. In terms of domain architecture, Ig-like V-type 2 spans 63–172 (PTIVKVFKQP…YGPSGQKTVQ (110 aa)). Intrachain disulfides connect Cys-95/Cys-158, Cys-208/Cys-251, Cys-292/Cys-330, and Cys-373/Cys-423. Ig-like C2-type domains are found at residues 183 to 266 (PTEQ…TAIT), 271 to 347 (DLSL…ESLT), and 354 to 439 (PQIK…LNVS). The helical transmembrane segment at 466–487 (LIVGIVLRLLHGALVAGVVYWL) threads the bilayer. The Cytoplasmic portion of the chain corresponds to 488–521 (YVKKSKTASKHVNKDLGNLEENKKLEQNNHRTEA). Residues 500 to 521 (NKDLGNLEENKKLEQNNHRTEA) are disordered. A compositionally biased stretch (basic and acidic residues) spans 507–521 (EENKKLEQNNHRTEA).

Homodimer. Interacts (via extracellular domain) with CD6 (via extracellular domain). Homodimerization and interaction with CD6 involve the same region and cannot occur simultaneously. The affinity for CD6 is much higher than the affinity for self-association. Interacts (via glycosylated extracellular domain) with LGALS1 and LGALS3. Interaction with LGALS1 or LGALS3 inhibits interaction with CD6. Glycosylated.

The protein resides in the cell membrane. It localises to the cell projection. Its subcellular location is the axon. The protein localises to the dendrite. Functionally, cell adhesion molecule that mediates both heterotypic cell-cell contacts via its interaction with CD6, as well as homotypic cell-cell contacts. Promotes T-cell activation and proliferation via its interactions with CD6. Contributes to the formation and maturation of the immunological synapse via its interactions with CD6. Mediates homotypic interactions with cells that express ALCAM. Mediates attachment of dendritic cells onto endothelial cells via homotypic interaction. Inhibits endothelial cell migration and promotes endothelial tube formation via homotypic interactions. Required for normal organization of the lymph vessel network. Required for normal hematopoietic stem cell engraftment in the bone marrow. Plays a role in hematopoiesis; required for normal numbers of hematopoietic stem cells in bone marrow. Promotes in vitro osteoblast proliferation and differentiation. Promotes neurite extension, axon growth and axon guidance; axons grow preferentially on surfaces that contain ALCAM. Mediates outgrowth and pathfinding for retinal ganglion cell axons. The protein is CD166 antigen (ALCAM) of Canis lupus familiaris (Dog).